The following is a 434-amino-acid chain: Nicotinate phosphoribosyltransferase (434 aa).

Histidine 242 is modified (phosphohistidine; by autocatalysis).

The protein belongs to the NAPRTase family. Transiently phosphorylated on a His residue during the reaction cycle. Phosphorylation strongly increases the affinity for substrates and increases the rate of nicotinate D-ribonucleotide production. Dephosphorylation regenerates the low-affinity form of the enzyme, leading to product release.

It catalyses the reaction nicotinate + 5-phospho-alpha-D-ribose 1-diphosphate + ATP + H2O = nicotinate beta-D-ribonucleotide + ADP + phosphate + diphosphate. Its pathway is cofactor biosynthesis; NAD(+) biosynthesis; nicotinate D-ribonucleotide from nicotinate: step 1/1. Its function is as follows. Catalyzes the synthesis of beta-nicotinate D-ribonucleotide from nicotinate and 5-phospho-D-ribose 1-phosphate at the expense of ATP. The protein is Nicotinate phosphoribosyltransferase of Rhizobium rhizogenes (strain K84 / ATCC BAA-868) (Agrobacterium radiobacter).